A 201-amino-acid chain; its full sequence is FMN-dependent NADH:quinone oxidoreductase (201 aa).

FMN-binding positions include S10, 16 to 18, 96 to 99, and 140 to 143; these read SQS, MYNF, and SRGG.

This sequence belongs to the azoreductase type 1 family. In terms of assembly, homodimer. The cofactor is FMN.

It carries out the reaction 2 a quinone + NADH + H(+) = 2 a 1,4-benzosemiquinone + NAD(+). The catalysed reaction is N,N-dimethyl-1,4-phenylenediamine + anthranilate + 2 NAD(+) = 2-(4-dimethylaminophenyl)diazenylbenzoate + 2 NADH + 2 H(+). Quinone reductase that provides resistance to thiol-specific stress caused by electrophilic quinones. Functionally, also exhibits azoreductase activity. Catalyzes the reductive cleavage of the azo bond in aromatic azo compounds to the corresponding amines. The sequence is that of FMN-dependent NADH:quinone oxidoreductase from Shigella boydii serotype 4 (strain Sb227).